The sequence spans 190 residues: Protein GrpE (190 aa).

A compositionally biased stretch (basic and acidic residues) spans 1–10 (MKKHVTEEQK). Residues 1-42 (MKKHVTEEQKTSAAPEAEQASPESSAAEAATPEERISRLEEQ) are disordered. The segment covering 12–30 (SAAPEAEQASPESSAAEAA) has biased composition (low complexity). Residues 32 to 42 (PEERISRLEEQ) show a composition bias toward basic and acidic residues.

The protein belongs to the GrpE family. As to quaternary structure, homodimer.

Its subcellular location is the cytoplasm. Its function is as follows. Participates actively in the response to hyperosmotic and heat shock by preventing the aggregation of stress-denatured proteins, in association with DnaK and GrpE. It is the nucleotide exchange factor for DnaK and may function as a thermosensor. Unfolded proteins bind initially to DnaJ; upon interaction with the DnaJ-bound protein, DnaK hydrolyzes its bound ATP, resulting in the formation of a stable complex. GrpE releases ADP from DnaK; ATP binding to DnaK triggers the release of the substrate protein, thus completing the reaction cycle. Several rounds of ATP-dependent interactions between DnaJ, DnaK and GrpE are required for fully efficient folding. The polypeptide is Protein GrpE (Pelobacter propionicus (strain DSM 2379 / NBRC 103807 / OttBd1)).